The sequence spans 379 residues: Cytochrome b (379 aa).

4 consecutive transmembrane segments (helical) span residues 33 to 53 (FGSLLGLCLIAQILTGLFLAM), 77 to 98 (WLIRNMHANGASFFFICIYLHI), 113 to 133 (WNVGVVLLLLVMMTAFVGYVL), and 178 to 198 (FFAFHFLLPFIGAAATLVHLI). The heme b site is built by histidine 83 and histidine 97. Heme b is bound by residues histidine 182 and histidine 196. Histidine 201 is a binding site for a ubiquinone. The next 4 membrane-spanning stretches (helical) occupy residues 226–246 (YKDILGFTFLLTALIALALFS), 288–308 (LGGVLALLASILVLMVVPLLH), 320–340 (FTQVLFWLLIADVAILTWIGG), and 347–367 (FIIIGQVASFLYFSLFLVLAP).

This sequence belongs to the cytochrome b family. In terms of assembly, the cytochrome bc1 complex contains 3 respiratory subunits (MT-CYB, CYC1 and UQCRFS1), 2 core proteins (UQCRC1 and UQCRC2) and probably 6 low-molecular weight proteins. It depends on heme b as a cofactor.

It localises to the mitochondrion inner membrane. Its function is as follows. Component of the ubiquinol-cytochrome c reductase complex (complex III or cytochrome b-c1 complex) that is part of the mitochondrial respiratory chain. The b-c1 complex mediates electron transfer from ubiquinol to cytochrome c. Contributes to the generation of a proton gradient across the mitochondrial membrane that is then used for ATP synthesis. In Poeciliopsis occidentalis (Gila topminnow), this protein is Cytochrome b (mt-cyb).